A 502-amino-acid chain; its full sequence is T-complex protein 11-like X-linked protein 1 (502 aa).

The disordered stretch occupies residues 1–36; sequence MPKTEETVLQNDPSVAENGAPEPKTPGQSQKSKSFC.

The protein belongs to the TCP11 family.

This is T-complex protein 11-like X-linked protein 1 from Homo sapiens (Human).